The chain runs to 477 residues: Ribulose bisphosphate carboxylase large chain (477 aa).

Residues 1–2 constitute a propeptide that is removed on maturation; the sequence is MS. P3 carries the N-acetylproline modification. The residue at position 14 (K14) is an N6,N6,N6-trimethyllysine. Substrate is bound by residues N123 and T173. The active-site Proton acceptor is the K175. Residue K177 coordinates substrate. Residues K201, D203, and E204 each contribute to the Mg(2+) site. At K201 the chain carries N6-carboxylysine. The active-site Proton acceptor is the H294. Substrate is bound by residues R295, H327, and S379.

This sequence belongs to the RuBisCO large chain family. Type I subfamily. As to quaternary structure, heterohexadecamer of 8 large chains and 8 small chains; disulfide-linked. The disulfide link is formed within the large subunit homodimers. It depends on Mg(2+) as a cofactor. The disulfide bond which can form in the large chain dimeric partners within the hexadecamer appears to be associated with oxidative stress and protein turnover.

It is found in the plastid. The protein localises to the chloroplast. The enzyme catalyses 2 (2R)-3-phosphoglycerate + 2 H(+) = D-ribulose 1,5-bisphosphate + CO2 + H2O. The catalysed reaction is D-ribulose 1,5-bisphosphate + O2 = 2-phosphoglycolate + (2R)-3-phosphoglycerate + 2 H(+). In terms of biological role, ruBisCO catalyzes two reactions: the carboxylation of D-ribulose 1,5-bisphosphate, the primary event in carbon dioxide fixation, as well as the oxidative fragmentation of the pentose substrate in the photorespiration process. Both reactions occur simultaneously and in competition at the same active site. This Dioscorea elephantipes (Elephant's foot yam) protein is Ribulose bisphosphate carboxylase large chain.